A 233-amino-acid chain; its full sequence is Large ribosomal subunit protein uL1 (233 aa).

Belongs to the universal ribosomal protein uL1 family. Part of the 50S ribosomal subunit.

Functionally, binds directly to 23S rRNA. The L1 stalk is quite mobile in the ribosome, and is involved in E site tRNA release. Protein L1 is also a translational repressor protein, it controls the translation of the L11 operon by binding to its mRNA. In Geotalea daltonii (strain DSM 22248 / JCM 15807 / FRC-32) (Geobacter daltonii), this protein is Large ribosomal subunit protein uL1.